Here is a 477-residue protein sequence, read N- to C-terminus: Mitochondrial adenyl nucleotide antiporter SLC25A24 (477 aa).

The interval Met-1–Asp-173 is regulatory N-terminal domain. The Mitochondrial intermembrane segment spans residues Met-1–Gln-197. 4 EF-hand domains span residues Glu-19–Pro-54, Glu-61–Lys-85, Asp-86–Thr-121, and Ile-122–Thr-157. Ca(2+) contacts are provided by Asp-32, Asn-34, Asp-36, Val-38, Glu-43, Asp-68, Asn-70, Asp-72, Lys-74, Glu-79, Asp-99, Asn-101, Asp-103, Lys-105, Glu-110, Asp-135, Asp-137, Thr-139, Thr-141, and Glu-146. Residues Ile-159–His-168 form a linker region region. Residues Ile-174–Lys-477 are C-terminal transmembrane transporter domain. Solcar repeat units follow at residues Gly-192 to Leu-278, Ile-286 to His-371, and Pro-383 to Thr-471. The helical transmembrane segment at Leu-198 to Leu-215 threads the bilayer. At Asp-216–Arg-252 the chain is on the mitochondrial matrix side. The helical transmembrane segment at Gly-253–Tyr-272 threads the bilayer. Residues Glu-273 to Gly-295 lie on the Mitochondrial intermembrane side of the membrane. The helical transmembrane segment at Ser-296–Met-309 threads the bilayer. The Mitochondrial matrix portion of the chain corresponds to Glu-310–Lys-345. Position 320 is an N6-acetyllysine; alternate (Lys-320). Lys-320 carries the N6-succinyllysine; alternate modification. N6-acetyllysine is present on Lys-336. The chain crosses the membrane as a helical span at residues Gly-346 to Tyr-365. At Glu-366 to Leu-388 the chain is on the mitochondrial intermembrane side. Residues Leu-389–Leu-406 traverse the membrane as a helical segment. At Ala-407–Arg-445 the chain is on the mitochondrial matrix side. Lys-437 is subject to N6-acetyllysine; alternate. Lys-437 carries the post-translational modification N6-succinyllysine; alternate. The helical transmembrane segment at Gly-446 to Tyr-465 threads the bilayer. Residues Glu-466 to Lys-477 lie on the Mitochondrial intermembrane side of the membrane.

The protein belongs to the mitochondrial carrier (TC 2.A.29) family. Monomer.

It is found in the mitochondrion inner membrane. The enzyme catalyses Mg(2+)(out) + phosphate(in) + ATP(out) = Mg(2+)(in) + phosphate(out) + ATP(in). It catalyses the reaction ADP(out) + phosphate(in) + H(+)(out) = ADP(in) + phosphate(out) + H(+)(in). The catalysed reaction is AMP(out) + phosphate(in) = AMP(in) + phosphate(out). It carries out the reaction phosphate(in) + ATP(out) + 2 H(+)(out) = phosphate(out) + ATP(in) + 2 H(+)(in). The enzyme catalyses dADP(in) + ADP(out) = dADP(out) + ADP(in). It catalyses the reaction Mg(2+)(in) + ADP(out) + ATP(in) + H(+)(out) = Mg(2+)(out) + ADP(in) + ATP(out) + H(+)(in). The catalysed reaction is ADP(out) + diphosphate(in) = ADP(in) + diphosphate(out). It carries out the reaction dAMP(in) + ADP(out) + H(+)(out) = dAMP(out) + ADP(in) + H(+)(in). The enzyme catalyses 3'-AMP(in) + ADP(out) + H(+)(out) = 3'-AMP(out) + ADP(in) + H(+)(in). It catalyses the reaction dAMP(out) + phosphate(in) = dAMP(in) + phosphate(out). The catalysed reaction is 3'-AMP(out) + phosphate(in) = 3'-AMP(in) + phosphate(out). It carries out the reaction dADP(out) + phosphate(in) + H(+)(out) = dADP(in) + phosphate(out) + H(+)(in). Its activity is regulated as follows. Activated by an increase in cytosolic calcium levels that induce a conformational change of the N-terminal regulatory domain, uncapping the channel and allowing transport. Inhibited by bathophenanthroline, mersalyl, p-hydroxymercuribenzoate, bromcresol purple and tannic acid. Functionally, electroneutral antiporter that mediates the transport of adenyl nucleotides through the inner mitochondrial membrane. Originally identified as an ATP-magnesium/inorganic phosphate antiporter, it also acts as a broad specificity adenyl nucleotide antiporter. By regulating the mitochondrial matrix adenyl nucleotide pool could adapt to changing cellular energetic demands and indirectly regulate adenyl nucleotide-dependent metabolic pathways. In vitro, a low activity is also observed with guanyl and pyrimidine nucleotides. May play a role in protecting cells against oxidative stress-induced cell death, by buffering calcium levels in the mitochondrial matrix through the formation of calcium-phosphate precipitates. This Bos taurus (Bovine) protein is Mitochondrial adenyl nucleotide antiporter SLC25A24 (SLC25A24).